The primary structure comprises 331 residues: Protein mono-ADP-ribosyltransferase PARP11 (331 aa).

N6-(ADP-ribosyl)lysine is present on K11. One can recognise a WWE domain in the interval 15–99 (SDVDDMDTSD…VTGKQRLIKR (85 aa)). Residues C49 and C65 each carry the ADP-ribosylcysteine modification. Position 80 is an ADP-ribosyl aspartic acid (D80). The PARP catalytic domain maps to 116 to 331 (IPMPTHWENV…IYPEYLIDFH (216 aa)).

This sequence belongs to the ARTD/PARP family. In terms of processing, auto-mono-ADP-ribosylated. Predominantly expressed in testis, preferentially in postmeiotic germ cells. Also detectable in other tissues, including liver, lung, spleen, thymus and brain.

The protein resides in the nucleus. It localises to the nuclear pore complex. The enzyme catalyses L-aspartyl-[protein] + NAD(+) = 4-O-(ADP-D-ribosyl)-L-aspartyl-[protein] + nicotinamide. The catalysed reaction is L-cysteinyl-[protein] + NAD(+) = S-(ADP-D-ribosyl)-L-cysteinyl-[protein] + nicotinamide + H(+). It catalyses the reaction L-glutamyl-[protein] + NAD(+) = 5-O-(ADP-D-ribosyl)-L-glutamyl-[protein] + nicotinamide. It carries out the reaction L-lysyl-[protein] + NAD(+) = N(6)-(ADP-D-ribosyl)-L-lysyl-[protein] + nicotinamide + H(+). Functionally, mono-ADP-ribosyltransferase that mediates mono-ADP-ribosylation of target proteins. Plays a role in nuclear envelope stability and nuclear remodeling during spermiogenesis. Inhibits the type I interferon activated signaling pathway. Mechanistically, mono-ADP-ribosylates beta-TrCP/BTRC to promote IFNAR1 ubiquitination and protect BTRC from ubiquitin-proteasome degradation. The protein is Protein mono-ADP-ribosyltransferase PARP11 of Mus musculus (Mouse).